Reading from the N-terminus, the 651-residue chain is Transcription factor E2-alpha (651 aa).

Disordered stretches follow at residues 32–107, 131–208, and 341–378; these read ANGK…SERN, LSLS…KTPS, and DHSS…ALSP. Composition is skewed to low complexity over residues 56–73, 131–148, and 341–354; these read SSGS…FDPS, LSLS…KSSS, and DHSS…PSTP. A phosphoserine mark is found at serine 135 and serine 140. Threonine 353 bears the Phosphothreonine mark. Serine 357 is subject to Phosphoserine. Arginine 369 carries the post-translational modification Omega-N-methylarginine. A Phosphoserine modification is found at serine 377. A leucine-zipper region spans residues 387–422; that stretch reads LSKMEDRLDEAIHVLRSHAVGTASDLHGLLPGHGAL. Positions 457–549 are disordered; it reads HNHASLPSQP…KAEREKERRV (93 aa). A compositionally biased stretch (low complexity) spans 461 to 479; that stretch reads SLPSQPSSLPDLSQRPPDS. A Glycyl lysine isopeptide (Lys-Gly) (interchain with G-Cter in SUMO2) cross-link involves residue lysine 496. Serine 526 is modified (phosphoserine). Phosphothreonine is present on aspartate 528. The residue at position 533 (aspartate 533) is a Phosphoserine. Over residues 539–549 the composition is skewed to basic and acidic residues; it reads QKAEREKERRV. The bHLH domain maps to 546–599; the sequence is ERRVANNARERLRVRDINEAFKELGRMCQLHLSSEKPQTKLLILHQAVAVILSL. A Glycyl lysine isopeptide (Lys-Gly) (interchain with G-Cter in SUMO2) cross-link involves residue lysine 622.

Homodimer. Heterodimer; efficient DNA binding requires dimerization with another bHLH protein. Forms a heterodimer with TWIST1 and TWIST2. Forms a heterodimer with NEUROD1; the heterodimer is inhibited in presence of ID2, but not NR0B2, to E-box element. Forms a heterodimer with TCF15; the heterodimer binds E-box element. Forms a heterodimer with MYOG; heterodimerization enhances MYOG DNA-binding and transcriptional activities. Forms a heterodimer with ATOH8; repress transcription of TCF3 and TCF3-NEUROG3 dimer-induced transactivation of E box-dependent promoters. Component of a nuclear TAL-1 complex composed at least of CBFA2T3, LDB1, TAL1 and TCF3. Interacts with NEUROD2. Interacts with EP300. Interacts with PTF1A, TGFB1I1 and UBE2I. Interacts with BHLHA9. Interacts with ASB2; the interaction is mediated by SKP2 and targets TCF3 for Notch-induced proteasomal degradation. Interacts with transcription factor ASCL5/AmeloD. In terms of assembly, forms a heterodimer with ATOH7; required for ATOH7 DNA-binding. As to quaternary structure, interacts with RALGAPA1. Interacts with FIGLA. Phosphorylated following NGF stimulation. In terms of processing, undergoes Notch-induced ubiquitination and subsequent proteasomal degradation which is mediated by ASB1 or ASB2, the substrate-recognition components of probable ECS E3 ubiquitin-protein ligase complexes.

The protein resides in the nucleus. In terms of biological role, transcriptional regulator involved in the initiation of neuronal differentiation and mesenchymal to epithelial transition. Heterodimers between TCF3 and tissue-specific basic helix-loop-helix (bHLH) proteins play major roles in determining tissue-specific cell fate during embryogenesis, like muscle or early B-cell differentiation. Together with TCF15, required for the mesenchymal to epithelial transition. Dimers bind DNA on E-box motifs: 5'-CANNTG-3'. Binds to the kappa-E2 site in the kappa immunoglobulin gene enhancer. Binds to IEB1 and IEB2, which are short DNA sequences in the insulin gene transcription control region. Facilitates ATOH7 binding to DNA at the consensus sequence 5'-CAGGTG-3', and positively regulates transcriptional activity. The chain is Transcription factor E2-alpha (Tcf3) from Mus musculus (Mouse).